The sequence spans 115 residues: SPbeta prophage-derived uncharacterized protein YoqS (115 aa).

This chain is SPbeta prophage-derived uncharacterized protein YoqS (yoqS), found in Bacillus subtilis (strain 168).